Here is an 87-residue protein sequence, read N- to C-terminus: Large ribosomal subunit protein bL27 (87 aa).

A compositionally biased stretch (polar residues) spans 1–11 (MASKASGGSTR). A disordered region spans residues 1-21 (MASKASGGSTRNGRDSNSKRL).

This sequence belongs to the bacterial ribosomal protein bL27 family.

This chain is Large ribosomal subunit protein bL27, found in Hydrogenobaculum sp. (strain Y04AAS1).